The chain runs to 524 residues: Lysophospholipid acyltransferase LPCAT4 (524 aa).

A run of 2 helical transmembrane segments spans residues 40–62 and 87–107; these read CLLGVLLAPIRVLLAFIVLFLLW and TVCHNGVLGLSRLLFFLLGFL. Positions 129 to 134 match the HXXXXD motif motif; that stretch reads HSTFFD. A glycan (N-linked (GlcNAc...) asparagine) is linked at N152. The segment at 490-524 is disordered; it reads PHKPRSTSQIPNASSPSSPTALANGTVQAPKQKGD. Residues 495–518 show a composition bias toward polar residues; it reads STSQIPNASSPSSPTALANGTVQA.

This sequence belongs to the 1-acyl-sn-glycerol-3-phosphate acyltransferase family. In terms of tissue distribution, widely expressed with much higher level in brain. Expressed in erythroleukemic cells but not in reticulocytes.

Its subcellular location is the endoplasmic reticulum membrane. The catalysed reaction is a 1-acyl-sn-glycero-3-phosphoethanolamine + an acyl-CoA = a 1,2-diacyl-sn-glycero-3-phosphoethanolamine + CoA. It catalyses the reaction a 1-O-(1Z-alkenyl)-sn-glycero-3-phosphoethanolamine + an acyl-CoA = a 1-O-(1Z-alkenyl)-2-acyl-sn-glycero-3-phosphoethanolamine + CoA. The enzyme catalyses a 1-acyl-sn-glycero-3-phosphocholine + an acyl-CoA = a 1,2-diacyl-sn-glycero-3-phosphocholine + CoA. It carries out the reaction a 1-O-alkyl-sn-glycero-3-phosphocholine + acetyl-CoA = a 1-O-alkyl-2-acetyl-sn-glycero-3-phosphocholine + CoA. The catalysed reaction is a 1-acyl-sn-glycero-3-phospho-L-serine + an acyl-CoA = a 1,2-diacyl-sn-glycero-3-phospho-L-serine + CoA. It catalyses the reaction octanoyl-CoA + a 1-acyl-sn-glycero-3-phosphoethanolamine = 1-acyl-2-octanoyl-sn-glycero-3-phosphoethanolamine + CoA. The enzyme catalyses a 1-acyl-sn-glycero-3-phosphoethanolamine + hexadecanoyl-CoA = 1-acyl-2-hexadecanoyl-sn-glycero-3-phosphoethanolamine + CoA. It carries out the reaction a 1-acyl-sn-glycero-3-phosphoethanolamine + octadecanoyl-CoA = 1-acyl-2-octadecanoyl-sn-glycero-3-phosphoethanolamine + CoA. The catalysed reaction is a 1-acyl-sn-glycero-3-phosphoethanolamine + (9Z)-octadecenoyl-CoA = 1-acyl-2-(9Z)-octadecenoyl-sn-glycero-3-phosphoethanolamine + CoA. It catalyses the reaction a 1-acyl-sn-glycero-3-phosphoethanolamine + (5Z,8Z,11Z,14Z)-eicosatetraenoyl-CoA = 1-acyl-2-(5Z,8Z,11Z,14Z)-eicosatetraenoyl-sn-glycero-3-phosphoethanolamine + CoA. The enzyme catalyses a 1-O-(1Z-alkenyl)-sn-glycero-3-phosphoethanolamine + octanoyl-CoA = 1-O-(1Z)-alkenyl-2-octanoyl-sn-glycero-3-phosphoethanolamine + CoA. It carries out the reaction a 1-O-(1Z-alkenyl)-sn-glycero-3-phosphoethanolamine + hexadecanoyl-CoA = 1-O-(1Z)-alkenyl-2-hexadecanoyl-sn-glycero-3-phosphoethanolamine + CoA. The catalysed reaction is a 1-O-(1Z-alkenyl)-sn-glycero-3-phosphoethanolamine + octadecanoyl-CoA = 1-O-(1Z)-alkenyl-2-octadecanoyl-sn-glycero-3-phosphoethanolamine + CoA. It catalyses the reaction a 1-O-(1Z-alkenyl)-sn-glycero-3-phosphoethanolamine + (9Z)-octadecenoyl-CoA = 1-O-(1Z)-alkenyl-2-(9Z)-octadecenoyl-sn-glycero-3-phosphoethanolamine + CoA. The enzyme catalyses a 1-O-(1Z-alkenyl)-sn-glycero-3-phosphoethanolamine + (5Z,8Z,11Z,14Z)-eicosatetraenoyl-CoA = 1-O-(1Z)-alkenyl-2-(5Z,8Z,11Z,14Z)-eicosatetraenoyl-sn-glycero-3-phosphoethanolamine + CoA. It carries out the reaction a 1-acyl-sn-glycero-3-phosphocholine + hexadecanoyl-CoA = 1-acyl-2-hexadecanoyl-sn-glycero-3-phosphocholine + CoA. The catalysed reaction is a 1-acyl-sn-glycero-3-phosphocholine + (9Z)-octadecenoyl-CoA = a 1-acyl-2-(9Z)-octadecenoyl-sn-glycero-3-phosphocholine + CoA. It catalyses the reaction 1-O-hexadecyl-sn-glycero-3-phosphocholine + (9Z)-octadecenoyl-CoA = 1-O-hexadecyl-2-(9Z)-octadecenoyl-sn-glycero-3-phosphocholine + CoA. The enzyme catalyses 1-O-hexadecyl-sn-glycero-3-phosphocholine + (5Z,8Z,11Z,14Z)-eicosatetraenoyl-CoA = 1-O-hexadecyl-2-(5Z,8Z,11Z,14Z)-eicosatetraenoyl-sn-glycero-3-phosphocholine + CoA. It carries out the reaction 1-hexadecanoyl-sn-glycero-3-phospho-L-serine + (9Z)-octadecenoyl-CoA = 1-hexadecanoyl-2-(9Z-octadecenoyl)-sn-glycero-3-phospho-L-serine + CoA. The catalysed reaction is 1-octadecanoyl-sn-glycero-3-phospho-(1'-sn-glycerol) + (9Z)-octadecenoyl-CoA = 1-octadecanoyl-2-(9Z-octadecenoyl)-sn-glycero-3-phospho-(1'-sn-glycerol) + CoA. It catalyses the reaction 1-octadecanoyl-sn-glycero-3-phospho-(1'-sn-glycerol) + (5Z,8Z,11Z,14Z)-eicosatetraenoyl-CoA = 1-octadecanoyl-2-(5Z,8Z,11Z,14Z-eicosatetraenoyl)-sn-glycero-3-phospho-(1'-sn-glycerol) + CoA. Its pathway is lipid metabolism; phospholipid metabolism. Its function is as follows. Displays acyl-CoA-dependent lysophospholipid acyltransferase activity with a subset of lysophospholipids as substrates; converts lysophosphatidylethanolamine to phosphatidylethanolamine, 1-alkenyl-lysophatidylethanolamine to 1-alkenyl-phosphatidylethanolamine, lysophosphatidylglycerol and alkyl-lysophosphatidylcholine to phosphatidylglycerol and alkyl-phosphatidylcholine, respectively. In contrast, has no lysophosphatidylinositol, glycerol-3-phosphate, diacylglycerol or lysophosphatidic acid acyltransferase activity. Prefers long chain acyl-CoAs (C16, C18) as acyl donors. Converts lysophosphatidylcholine to phosphatidycholine. In Mus musculus (Mouse), this protein is Lysophospholipid acyltransferase LPCAT4 (Lpcat4).